We begin with the raw amino-acid sequence, 85 residues long: Toxin BmKaTX15 (85 aa).

Positions 1-19 (MNYLVFFSLALLVMTGVES) are cleaved as a signal peptide. One can recognise an LCN-type CS-alpha/beta domain in the interval 21-83 (RDGYIADDKN…VPIRVPGKCN (63 aa)). Disulfide bonds link cysteine 31-cysteine 82, cysteine 35-cysteine 55, cysteine 41-cysteine 65, and cysteine 45-cysteine 67.

Belongs to the long (4 C-C) scorpion toxin superfamily. Sodium channel inhibitor family. Alpha subfamily. Expressed by the venom gland.

The protein resides in the secreted. Alpha toxins bind voltage-independently at site-3 of sodium channels (Nav) and inhibit the inactivation of the activated channels, thereby blocking neuronal transmission. In Olivierus martensii (Manchurian scorpion), this protein is Toxin BmKaTX15.